A 314-amino-acid chain; its full sequence is uncharacterized protein (314 aa).

The interval 1–70 (MAGNSQRRGA…QGRHKKTDDT (70 aa)) is disordered. Over residues 43-65 (QRPHHPAGKRAAKAARQAQGRHK) the composition is skewed to basic residues. The S-adenosyl-L-methionine site is built by glycine 265, isoleucine 285, and leucine 294.

It belongs to the class IV-like SAM-binding methyltransferase superfamily. RNA methyltransferase TrmH family.

This is an uncharacterized protein from Mycolicibacterium vanbaalenii (strain DSM 7251 / JCM 13017 / BCRC 16820 / KCTC 9966 / NRRL B-24157 / PYR-1) (Mycobacterium vanbaalenii).